The chain runs to 224 residues: Response regulator protein GraR (224 aa).

The 114-residue stretch at 2 to 115 folds into the Response regulatory domain; sequence QILLVEDDNT…VLIAKLQAIY (114 aa). D51 bears the 4-aspartylphosphate mark. The ompR/PhoB-type DNA-binding region spans 126-224; that stretch reads KRTLTWQDAV…KVGKGYMAHE (99 aa). A phosphothreonine mark is found at T128, T130, and T149.

In terms of assembly, interacts with GraX. Phosphorylated by GraS. Phosphorylated by Stk1; phosphorylation increases the DNA-binding activity of GraR.

Its subcellular location is the cytoplasm. Functionally, member of the two-component regulatory system GraR/GraS involved in resistance against cationic antimicrobial peptides (CAMPs). Upon phosphorylation by GraS, functions as a transcription regulator by direct binding to promoter regions of target genes such as adhesins, exoproteins, transporters, toxins, and proteins involved in cell wall synthesis. Down-regulates the expression of many genes involved in RNA and amino acid synthesis or glycolysis. The protein is Response regulator protein GraR (graR) of Staphylococcus aureus (strain MRSA252).